Reading from the N-terminus, the 570-residue chain is nebramycin 5' synthase (570 aa).

Positions 1 to 354 (MRVLGLNGWP…AAAAVAVELG (354 aa)) are kae1-like. Asp-12 is a tobramycin binding site. The Proton acceptor role is filled by His-14. An ATP-binding site is contributed by Lys-39. Residues His-114, His-118, and Asp-137 each coordinate Fe cation. Carbamoyl adenylate is bound by residues Gln-139, Gly-168, and Glu-172. 2 residues coordinate tobramycin: Glu-172 and Asp-228. Residues Gly-310 and Asn-314 each coordinate carbamoyl adenylate. Asp-338 is a Fe cation binding site. The interval 367–570 (GPEFSPDQVR…PYLVTKDLRH (204 aa)) is yrdC-like. Residues Arg-418 and Arg-449 each coordinate ATP. 418–419 (RA) contacts carbamoyl phosphate. Carbamoyl phosphate-binding positions include Arg-498 and 528 to 530 (NTS).

Belongs to the NodU/CmcH family. The cofactor is Fe(2+).

The enzyme catalyses tobramycin + carbamoyl phosphate + ATP + H2O = nebramycin 5' + AMP + phosphate + diphosphate + H(+). It catalyses the reaction kanamycin A + carbamoyl phosphate + ATP + H2O = 6''-O-carbamoylkanamycin A + AMP + phosphate + diphosphate + H(+). The catalysed reaction is carbamoyl phosphate + ATP + H2O = carbamoyl adenylate + phosphate + diphosphate. It carries out the reaction tobramycin + carbamoyl adenylate = nebramycin 5' + AMP + H(+). The enzyme catalyses carbamoyl adenylate + kanamycin A = 6''-O-carbamoylkanamycin A + AMP + H(+). It participates in antibiotic biosynthesis; kanamycin biosynthesis. Its pathway is antibiotic biosynthesis; tobramycin biosynthesis. With respect to regulation, ADP inhibits the formation of nebramycin 5'. Functionally, tobZ is involved in the biosynthesis of the 2-deoxystreptamine-containing aminoglycoside antibiotics such as nebramycin 5 and 6-O-carbamoylkanamycin. Catalyzes the hydrolysis of carbamoyl phosphate and its subsequent adenylation by ATP to yield O-carbamoyladenylate. Then it catalyzes the transfer of the carbamoyl moiety from O-carbamoyladenylate to the tobramycin 6-hydroxy group to yield nebramycin 5'. It catalyzes the same reaction with kanamycin A. These reactions are considerably slower in the presence of deoxy-ATP. In Streptoalloteichus tenebrarius (strain ATCC 17920 / DSM 40477 / JCM 4838 / CBS 697.72 / NBRC 16177 / NCIMB 11028 / NRRL B-12390 / A12253. 1 / ISP 5477) (Streptomyces tenebrarius), this protein is nebramycin 5' synthase (tobZ).